The chain runs to 567 residues: MSNISRQAYADMFGPTVGDKVRLADTELWIEVEDDLTTYGEEVKFGGGKVIRDGMGQGQMLAADCVDLVLTNALIVDHWGIVKADIGVKDGRIFAIGKAGNPDIQPNVTIPIGAATEVIAAEGKIVTAGGIDTHIHWICPQQAEEALVSGVTTMVGGGTGPAAGTHATTCTPGPWYISRMLQAADSLPVNIGLLGKGNVSQPDALREQVAAGVIGLKIHEDWGATPAAIDCALTVADEMDIQVALHSDTLNESGFVEDTLAAIGGRTIHTFHTEGAGGGHAPDIITACAHPNILPSSTNPTLPYTLNTIDEHLDMLMVCHHLDPDIAEDVAFAESRIRRETIAAEDVLHDLGAFSLTSSDSQAMGRVGEVILRTWQVAHRMKVQRGALAEETGDNDNFRVKRYIAKYTINPALTHGIAHEVGSIEVGKLADLVVWSPAFFGVKPATVIKGGMIAIAPMGDINASIPTPQPVHYRPMFGALGSARHHCRLTFLSQAAAANGVAERLNLRSAIAVVKGCRTVQKADMVHNSLQPNITVDAQTYEVRVDGELITSEPADVLPMAQRYFLF.

Residues 129–567 (GGIDTHIHWI…LPMAQRYFLF (439 aa)) enclose the Urease domain. Histidine 134, histidine 136, and lysine 217 together coordinate Ni(2+). Lysine 217 carries the N6-carboxylysine modification. Histidine 219 serves as a coordination point for substrate. Ni(2+) contacts are provided by histidine 246 and histidine 272. Histidine 320 (proton donor) is an active-site residue. Aspartate 360 is a Ni(2+) binding site.

Belongs to the metallo-dependent hydrolases superfamily. Urease alpha subunit family. As to quaternary structure, heterotrimer of UreA (gamma), UreB (beta) and UreC (alpha) subunits. Three heterotrimers associate to form the active enzyme. The apoenzyme interacts with an accessory complex composed of UreD, UreF and UreG, which is required for the assembly of the nickel containing metallocenter of UreC. The UreE protein may also play a direct role as a metallochaperone in nickel transfer to the urease apoprotein. Requires Ni cation as cofactor. Post-translationally, carboxylation allows a single lysine to coordinate two nickel ions.

Its subcellular location is the cytoplasm. It catalyses the reaction urea + 2 H2O + H(+) = hydrogencarbonate + 2 NH4(+). It participates in nitrogen metabolism; urea degradation; CO(2) and NH(3) from urea (urease route): step 1/1. Its activity is regulated as follows. The apoenzyme can be activated in vitro in the presence of nickel ions and carbon dioxide, which promotes carboxylation of Lys-217. The polypeptide is Urease subunit alpha (Klebsiella aerogenes (Enterobacter aerogenes)).